The primary structure comprises 378 residues: Erythronate-4-phosphate dehydrogenase (378 aa).

Residues serine 45 and threonine 66 each coordinate substrate. NAD(+) is bound by residues aspartate 146 and threonine 175. Arginine 208 is an active-site residue. NAD(+) is bound at residue aspartate 232. Residue glutamate 237 is part of the active site. Histidine 254 acts as the Proton donor in catalysis. Position 257 (glycine 257) interacts with NAD(+). Substrate is bound at residue tyrosine 258.

It belongs to the D-isomer specific 2-hydroxyacid dehydrogenase family. PdxB subfamily. In terms of assembly, homodimer.

The protein localises to the cytoplasm. The enzyme catalyses 4-phospho-D-erythronate + NAD(+) = (R)-3-hydroxy-2-oxo-4-phosphooxybutanoate + NADH + H(+). Its pathway is cofactor biosynthesis; pyridoxine 5'-phosphate biosynthesis; pyridoxine 5'-phosphate from D-erythrose 4-phosphate: step 2/5. Functionally, catalyzes the oxidation of erythronate-4-phosphate to 3-hydroxy-2-oxo-4-phosphonooxybutanoate. In Escherichia coli O17:K52:H18 (strain UMN026 / ExPEC), this protein is Erythronate-4-phosphate dehydrogenase.